A 150-amino-acid polypeptide reads, in one-letter code: Large ribosomal subunit protein bL9 (150 aa).

Belongs to the bacterial ribosomal protein bL9 family.

Functionally, binds to the 23S rRNA. The protein is Large ribosomal subunit protein bL9 of Limosilactobacillus fermentum (strain NBRC 3956 / LMG 18251) (Lactobacillus fermentum).